Here is an 88-residue protein sequence, read N- to C-terminus: uncharacterized protein (88 aa).

Helical transmembrane passes span 5–25 (AIPF…LLFV) and 36–56 (CYYL…VMIF).

The protein localises to the membrane. This is an uncharacterized protein from Saccharomyces cerevisiae (strain ATCC 204508 / S288c) (Baker's yeast).